The following is a 131-amino-acid chain: Small ribosomal subunit protein uS8 (131 aa).

This sequence belongs to the universal ribosomal protein uS8 family. In terms of assembly, part of the 30S ribosomal subunit. Contacts proteins S5 and S12.

Functionally, one of the primary rRNA binding proteins, it binds directly to 16S rRNA central domain where it helps coordinate assembly of the platform of the 30S subunit. The chain is Small ribosomal subunit protein uS8 from Mycoplasmopsis agalactiae (strain NCTC 10123 / CIP 59.7 / PG2) (Mycoplasma agalactiae).